A 185-amino-acid chain; its full sequence is Threonylcarbamoyl-AMP synthase (185 aa).

One can recognise a YrdC-like domain in the interval 1 to 185; sequence MDNFEQVLNA…AKTSQILRQG (185 aa). The disordered stretch occupies residues 163–185; the sequence is ETSGRDKPSEIRDAKTSQILRQG. Residues 164–177 are compositionally biased toward basic and acidic residues; the sequence is TSGRDKPSEIRDAK.

It belongs to the SUA5 family. TsaC subfamily.

It is found in the cytoplasm. It catalyses the reaction L-threonine + hydrogencarbonate + ATP = L-threonylcarbamoyladenylate + diphosphate + H2O. Functionally, required for the formation of a threonylcarbamoyl group on adenosine at position 37 (t(6)A37) in tRNAs that read codons beginning with adenine. Catalyzes the conversion of L-threonine, HCO(3)(-)/CO(2) and ATP to give threonylcarbamoyl-AMP (TC-AMP) as the acyladenylate intermediate, with the release of diphosphate. This Vibrio parahaemolyticus serotype O3:K6 (strain RIMD 2210633) protein is Threonylcarbamoyl-AMP synthase.